A 238-amino-acid polypeptide reads, in one-letter code: Aspartate/glutamate leucyltransferase (238 aa).

It belongs to the R-transferase family. Bpt subfamily.

It localises to the cytoplasm. It catalyses the reaction N-terminal L-glutamyl-[protein] + L-leucyl-tRNA(Leu) = N-terminal L-leucyl-L-glutamyl-[protein] + tRNA(Leu) + H(+). The catalysed reaction is N-terminal L-aspartyl-[protein] + L-leucyl-tRNA(Leu) = N-terminal L-leucyl-L-aspartyl-[protein] + tRNA(Leu) + H(+). Functionally, functions in the N-end rule pathway of protein degradation where it conjugates Leu from its aminoacyl-tRNA to the N-termini of proteins containing an N-terminal aspartate or glutamate. This is Aspartate/glutamate leucyltransferase from Shewanella sp. (strain MR-4).